The sequence spans 721 residues: Vacuolar transporter chaperone complex subunit 4 (721 aa).

The SPX domain maps to 1-148 (MKFGEHLSKS…GFILKPVFQV (148 aa)). At 1–630 (MKFGEHLSKS…PKVYFATERT (630 aa)) the chain is on the cytoplasmic side. Lys75 participates in a covalent cross-link: Glycyl lysine isopeptide (Lys-Gly) (interchain with G-Cter in ubiquitin). An important for inositol polyphosphate binding region spans residues 126 to 133 (GFQKIIKK). 7 residues coordinate ATP: Lys200, Arg264, Arg266, Lys281, Lys294, Tyr359, and Arg361. Glu426 is a Mn(2+) binding site. Lys458 is a catalytic residue. The disordered stretch occupies residues 489–512 (PLPTNIEITRPGRSDNEDNDFDED). The next 2 membrane-spanning stretches (helical) occupy residues 631-651 (YLSWLSISILLGGVSTTLLTY) and 652-672 (GSPTAMIGSIGFFITSLAVLI). The Cytoplasmic segment spans residues 673–699 (RTVMVYAKRVVNIRLKRAVDYEDKIGP). A helical membrane pass occupies residues 700-720 (GMVSVFLILSILFSFFCNLVA). Position 721 (Lys721) is a topological domain, vacuolar.

The protein belongs to the VTC4 family. In terms of assembly, the VTC core complex is an integral membrane heterooligomer composed of the catalytic subunit VTC4 and the accessory subunits VTC1, VTC2 and VTC3. The complex exists in 2 different sub-complexes: VTC1-VTC2-VCT4 and VCT1-VTC3-VTC4. The VCT1-VTC3-VTC4 subcomplex is mostly found on the vacuolar membrane. The VTC1-VTC2-VCT4 subcomplex is observed in the cell periphery, probably ER and nuclear envelope, but localizes to the vacuole under phosphate starvation. Each subunit contains 3 transmembrane helices. VTC1 is a small membrane protein without hydrophilic domain. VTC2, VTC3 and VTC4 are related and have 2 hydrophilic domains that face the cytosol, an N-terminal SPX domain and the central core domain. The central core in VTC4 is the catalytic domain, with the essential catalytic lysine replaced by isoleucine and leucine in VTC2 and VTC3, respectively. The core complex associates with the accessory subunit VTC5. The complex interacts with the v-SNARE NYV1 and with the V(0) subunit of V-ATPase VPH1. Mn(2+) is required as a cofactor.

The protein resides in the vacuole membrane. It localises to the cytoplasm. The protein localises to the cell cortex. Its subcellular location is the endoplasmic reticulum membrane. It is found in the cytoplasmic vesicle. The protein resides in the autophagosome membrane. It catalyses the reaction [phosphate](n) + ATP = [phosphate](n+1) + ADP. With respect to regulation, activity of the enzyme is Mn(2+)-dependent and enhanced in the presence of pyrophosphate (PPi). Its function is as follows. Catalytic subunit of the vacuolar transporter chaperone (VTC) complex. The VTC complex acts as a vacuolar polyphosphate polymerase that catalyzes the synthesis of inorganic polyphosphate (polyP) via transfer of phosphate from ATP to a growing polyP chain, releasing ADP. VTC exposes its catalytic domain VTC4 to the cytosol, where the growing polyP chain winds through a tunnel-shaped pocket, integrating cytoplasmic polymer synthesis with polyP membrane translocation. The VTC complex carries 9 vacuolar transmembrane domains, which are likely to constitute the translocation channel into the organelle lumen. PolyP synthesis is tightly coupled to its transport into the vacuole lumen, in order to avoid otherwise toxic intermediates in the cytosol, and it depends on the proton gradient across the membrane, formed by V-ATPase. The VTC complex also plays a role in vacuolar membrane fusion. Required for SEC18/NSF activity in SNARE priming, membrane binding of LMA1 and V(0) trans-complex formation. Binds inositol hexakisphosphate (Ins6P) and similar inositol polyphosphates, such as 5-diphospho-inositol pentakisphosphate (5-InsP7); these are important intracellular signaling molecules. Inositol polyphosphate binding promotes vacuolar polyphosphate synthesis. The VTC complex is required for microautophagy. It is a constituent of autophagic tubes and is required for scission of microautophagic vesicles from these tubes. The protein is Vacuolar transporter chaperone complex subunit 4 of Saccharomyces cerevisiae (strain ATCC 204508 / S288c) (Baker's yeast).